The sequence spans 430 residues: F-box protein At1g49990 (430 aa).

Positions 1 to 45 (METGRRRTIPEVEILARLPLRSIARFKSVCKRWKSVIESDYFRRL) constitute an F-box domain.

The protein is F-box protein At1g49990 of Arabidopsis thaliana (Mouse-ear cress).